Reading from the N-terminus, the 332-residue chain is Glyceraldehyde-3-phosphate dehydrogenase 3 (332 aa).

NAD(+) contacts are provided by Arg11, Ile12, and Asp33. Residues Lys46 and Lys63 each participate in a glycyl lysine isopeptide (Lys-Gly) (interchain with G-Cter in ubiquitin) cross-link. An NAD(+)-binding site is contributed by Thr120. 149–151 (SCT) provides a ligand contact to D-glyceraldehyde 3-phosphate. Cys150 acts as the Nucleophile in catalysis. Cysteine persulfide occurs at positions 150 and 154. A Glycyl lysine isopeptide (Lys-Gly) (interchain with G-Cter in URM1) cross-link involves residue Lys160. D-glyceraldehyde 3-phosphate is bound by residues Thr180, 209 to 210 (TG), and Arg232. Residue Ser302 is modified to Phosphoserine. Lys307 is covalently cross-linked (Glycyl lysine isopeptide (Lys-Gly) (interchain with G-Cter in URM1)). NAD(+) contacts are provided by Asn314 and Tyr318.

Belongs to the glyceraldehyde-3-phosphate dehydrogenase family. As to quaternary structure, homotetramer. In terms of processing, conjugated to URM1, a ubiquitin-like protein, in response to oxidative stresses. The attachment of URM1 to lysine residues exclusively depends on the presence of a peroxidatic cysteine in the target protein, with low specificity for the particular residue, motif, or structural context at which urmylation can occur. The URM1-conjugation reaction is mechanistically and directly coupled to the process of cysteine persulfidation, transfering the sulfur atom of the URM1 thiocarboxyl group to redox-active cysteine residues in the target protein if it is exposed to oxidative conditions. Post-translationally, persulfidated on specific redox-active cysteine residues. Persulfidation (also called protein S-sulfhydration) may provide a molecular mechanism that enables cells to protect vulnerable cysteine residues from reactive oxygen species (ROS) under stress conditions.

The protein localises to the cytoplasm. Its subcellular location is the mitochondrion. The enzyme catalyses D-glyceraldehyde 3-phosphate + phosphate + NAD(+) = (2R)-3-phospho-glyceroyl phosphate + NADH + H(+). The catalysed reaction is NADH + H2O = (6R)-NADHX. It carries out the reaction NADH + H2O = (6S)-NADHX. It catalyses the reaction NADPH + H2O = (6R)-NADPHX. The enzyme catalyses NADPH + H2O = (6S)-NADPHX. It participates in carbohydrate degradation; glycolysis; pyruvate from D-glyceraldehyde 3-phosphate: step 1/5. Functionally, glyceraldehyde-3-phosphate dehydrogenase (GAPDH) involved in glycolysis and gluconeogenesis. Catalyzes the reaction of glyceraldehyde-3-phosphate to 1,3 bis-phosphoglycerate. The contribution of the TDH1, TDH2, and TDH3 to the total glyceraldehyde-3-phosphate dehydrogenase activity is 10-15, 25-30, and 50-60%, respectively. As a side activity, catalyzes the hydration of the nicotinamide ring of NADH or NADPH at the C6 position to give the corresponding hydrates, NADHX and NADPHX, which exist as R and S epimers, that cannot act as electron donors or acceptors and inhibit several dehydrogenases, making them toxic. This chain is Glyceraldehyde-3-phosphate dehydrogenase 3, found in Saccharomyces cerevisiae (strain ATCC 204508 / S288c) (Baker's yeast).